The following is a 143-amino-acid chain: Nucleoside diphosphate kinase (143 aa).

ATP contacts are provided by K11, F59, R87, T93, R104, and N114. H117 serves as the catalytic Pros-phosphohistidine intermediate.

This sequence belongs to the NDK family. Homotetramer. Mg(2+) serves as cofactor.

The protein localises to the cytoplasm. It catalyses the reaction a 2'-deoxyribonucleoside 5'-diphosphate + ATP = a 2'-deoxyribonucleoside 5'-triphosphate + ADP. The enzyme catalyses a ribonucleoside 5'-diphosphate + ATP = a ribonucleoside 5'-triphosphate + ADP. In terms of biological role, major role in the synthesis of nucleoside triphosphates other than ATP. The ATP gamma phosphate is transferred to the NDP beta phosphate via a ping-pong mechanism, using a phosphorylated active-site intermediate. The chain is Nucleoside diphosphate kinase from Thioalkalivibrio sulfidiphilus (strain HL-EbGR7).